The sequence spans 1642 residues: Cortactin-binding protein 2 (1642 aa).

Disordered stretches follow at residues 1–27, 203–222, 366–433, 446–471, and 491–611; these read MATD…AEAA, KKKT…RSTE, IGAS…HPGL, GSNA…SPTS, and RFTS…PSID. Positions 119 to 276 form a coiled coil; sequence RKMQERMSTQ…EQLKRGTDSK (158 aa). The span at 385-394 shows a compositional bias: polar residues; the sequence is GPSTGSTADL. Residues 395–407 show a composition bias toward low complexity; that stretch reads TSSPTPVPSTVSP. An Asymmetric dimethylarginine modification is found at Arg-491. Residues 497–506 are compositionally biased toward pro residues; the sequence is AGAPPRPGAP. Residues 576-586 show a composition bias toward polar residues; sequence TVASPPSTLPQ. ANK repeat units follow at residues 702-732, 736-765, 769-798, 802-831, 835-864, and 904-934; these read GRPT…DINY, DGHS…QVNA, NGFT…NINH, GGQT…DRSV, DGWT…PAHG, and EGWT…EPER. The disordered stretch occupies residues 1441–1469; sequence SGAWRKVSTSPRKKSGRFSSPTWNKPDLS. A Phosphoserine modification is found at Ser-1513. Positions 1545 to 1642 are disordered; it reads LRRFDSSGNN…NSRDLEPTQK (98 aa). Composition is skewed to polar residues over residues 1552–1563 and 1571–1588; these read GNNPVFSATVNN and KEVS…SNSK. Residues 1613-1627 are compositionally biased toward low complexity; it reads SQNTKRSSSSSNTRQ.

In terms of assembly, interacts with CTTN/cortactin SH3 domain. Interacts with STRN, STRN4/zinedin and MOB4/phocein; this interactions mediate the association with the STRIPAK core complex and may regulate dendritic spine distribution of the STRIPAK complex in hippocampal neurons. Activation of glutamate receptors weakens the interaction with STRN and STRN4.

It localises to the cytoplasm. The protein resides in the cell cortex. Its subcellular location is the cell projection. The protein localises to the dendritic spine. Functionally, regulates the dendritic spine distribution of CTTN/cortactin in hippocampal neurons, and thus controls dendritic spinogenesis and dendritic spine maintenance. Associates with the striatin-interacting phosphatase and kinase (STRIPAK) core complex to regulate dendritic spine distribution of the STRIPAK complex in hippocampal neurons. The polypeptide is Cortactin-binding protein 2 (CTTNBP2) (Muntiacus muntjak (Barking deer)).